The primary structure comprises 614 residues: UPF0329 protein ECU03_0090 (614 aa).

2 stretches are compositionally biased toward basic and acidic residues: residues Glu-317 to Leu-338 and Leu-345 to Lys-354. Positions Glu-317 to Tyr-420 are disordered. The span at Ser-355–Lys-364 shows a compositional bias: basic residues. Residues Ala-372–Ser-381 show a composition bias toward basic and acidic residues. Over residues Glu-382–Leu-394 the composition is skewed to acidic residues. The segment covering Ser-408–Tyr-420 has biased composition (basic residues).

This sequence belongs to the UPF0329 family.

In Encephalitozoon cuniculi (strain GB-M1) (Microsporidian parasite), this protein is UPF0329 protein ECU03_0090.